Consider the following 222-residue polypeptide: UPF0758 protein YicR (222 aa).

In terms of domain architecture, MPN spans 100-222 (PLLSPEMTRE…NVSFAERGWI (123 aa)). Zn(2+)-binding residues include histidine 171, histidine 173, and aspartate 184. The JAMM motif motif lies at 171-184 (HNHPSGCAEPSKAD).

Belongs to the UPF0758 family. YicR subfamily.

This chain is UPF0758 protein YicR, found in Shigella boydii serotype 18 (strain CDC 3083-94 / BS512).